Consider the following 253-residue polypeptide: Chitooligosaccharide deacetylase (253 aa).

H61 and H126 together coordinate Mg(2+).

It belongs to the YdjC deacetylase family. ChbG subfamily. In terms of assembly, homodimer. Requires Mg(2+) as cofactor.

Its subcellular location is the cytoplasm. The enzyme catalyses N,N'-diacetylchitobiose + H2O = N-acetyl-beta-D-glucosaminyl-(1-&gt;4)-D-glucosamine + acetate. It carries out the reaction diacetylchitobiose-6'-phosphate + H2O = N'-monoacetylchitobiose-6'-phosphate + acetate. The protein operates within glycan degradation; chitin degradation. Its function is as follows. Involved in the degradation of chitin. ChbG is essential for growth on the acetylated chitooligosaccharides chitobiose and chitotriose but is dispensable for growth on cellobiose and chitosan dimer, the deacetylated form of chitobiose. Deacetylation of chitobiose-6-P and chitotriose-6-P is necessary for both the activation of the chb promoter by the regulatory protein ChbR and the hydrolysis of phosphorylated beta-glucosides by the phospho-beta-glucosidase ChbF. Catalyzes the removal of only one acetyl group from chitobiose-6-P to yield monoacetylchitobiose-6-P, the inducer of ChbR and the substrate of ChbF. The chain is Chitooligosaccharide deacetylase from Yersinia pestis bv. Antiqua (strain Angola).